The following is a 59-amino-acid chain: Large ribosomal subunit protein uL30 (59 aa).

Belongs to the universal ribosomal protein uL30 family. Part of the 50S ribosomal subunit.

The protein is Large ribosomal subunit protein uL30 of Staphylococcus haemolyticus (strain JCSC1435).